Here is a 171-residue protein sequence, read N- to C-terminus: Small ribosomal subunit protein uS4 (171 aa).

The 65-residue stretch at 103–167 folds into the S4 RNA-binding domain; that stretch reads RRLQTLVHKR…SPMKKQIEAA (65 aa).

The protein belongs to the universal ribosomal protein uS4 family. In terms of assembly, part of the 30S ribosomal subunit. Contacts protein S5. The interaction surface between S4 and S5 is involved in control of translational fidelity.

Its function is as follows. One of the primary rRNA binding proteins, it binds directly to 16S rRNA where it nucleates assembly of the body of the 30S subunit. With S5 and S12 plays an important role in translational accuracy. This Methanothermobacter thermautotrophicus (strain ATCC 29096 / DSM 1053 / JCM 10044 / NBRC 100330 / Delta H) (Methanobacterium thermoautotrophicum) protein is Small ribosomal subunit protein uS4.